Here is a 170-residue protein sequence, read N- to C-terminus: Putative phosphoesterase OB1230 (170 aa).

The Proton donor role is filled by H34. 2 short sequence motifs (HXTX) span residues H34–L37 and H115–I118. The active-site Proton acceptor is the H115.

Belongs to the 2H phosphoesterase superfamily. YjcG family.

This is Putative phosphoesterase OB1230 from Oceanobacillus iheyensis (strain DSM 14371 / CIP 107618 / JCM 11309 / KCTC 3954 / HTE831).